The chain runs to 565 residues: Probable protease Gilli_2517 (565 aa).

Its function is as follows. Probably a dedicated protease for substrate gasdermin bGSDM; cleaves the bGSDM precursor, releasing the pore-forming moiety, which integrates into the membrane and triggers cell death. Involved in defense against bacteriophages. Expression of bGSDM and this neighboring protease is not toxic in E.coli. This is Probable protease Gilli_2517 from Gillisia limnaea (strain DSM 15749 / LMG 21470 / R-8282).